We begin with the raw amino-acid sequence, 1082 residues long: Inner tegument protein (1082 aa).

The tract at residues 604–1082 (DHIDCLFNIS…QQDLIAPLTF (479 aa)) is interaction with large tegument protein.

Belongs to the herpesviridae inner tegument protein family. As to quaternary structure, interacts (via C-terminus) with the large tegument protein/LTP (via N-terminus).

It is found in the virion tegument. Its subcellular location is the host cytoplasm. The protein resides in the host nucleus. It localises to the host Golgi apparatus. The protein localises to the host trans-Golgi network. In terms of biological role, plays an essential role in cytoplasmic secondary envelopment during viral egress. Interacts with the capsid via the large tegument protein/LTP and participates in its transport to the host trans-Golgi network (TGN) where secondary envelopment occurs. Modulates tegumentation and capsid accumulation at the viral assembly complex. In Homo sapiens (Human), this protein is Inner tegument protein (U30).